Here is a 218-residue protein sequence, read N- to C-terminus: Capsid protein (218 aa).

Met1 carries the N-acetylmethionine; by host modification. The tract at residues 1–28 (MDKSESTSAGRNRRRRPRRGSRSAPSSA) is disordered. Positions 11–21 (RNRRRRPRRGS) are enriched in basic residues.

Belongs to the cucumovirus capsid protein family.

It is found in the virion. Its function is as follows. Capsid protein. Probably binds RNA and plays a role in packaging. The protein is Capsid protein of Cucumis sativus (Cucumber).